The primary structure comprises 354 residues: NADH-quinone oxidoreductase subunit H (354 aa).

8 helical membrane passes run 23-43 (LVRAVCIILPLLLCVAYLILW), 91-111 (YIIAPLMVLMPAVAIWAVIPF), 124-144 (LLYVMAISSVGVYGVILAGWA), 162-182 (ISYEIAMGFALVTVLMVTGSL), 203-223 (ILSWNWLPLLPMFGVYFISGV), 250-270 (GMAFALFFLAEYINMIVISAL), 291-311 (IPGFFWLLIKVFLLLSVFIWL), and 330-350 (IFIPLTVGWLVVVAIWLVSPW).

This sequence belongs to the complex I subunit 1 family. As to quaternary structure, NDH-1 is composed of 14 different subunits. Subunits NuoA, H, J, K, L, M, N constitute the membrane sector of the complex.

It localises to the cell inner membrane. It carries out the reaction a quinone + NADH + 5 H(+)(in) = a quinol + NAD(+) + 4 H(+)(out). In terms of biological role, NDH-1 shuttles electrons from NADH, via FMN and iron-sulfur (Fe-S) centers, to quinones in the respiratory chain. The immediate electron acceptor for the enzyme in this species is believed to be ubiquinone. Couples the redox reaction to proton translocation (for every two electrons transferred, four hydrogen ions are translocated across the cytoplasmic membrane), and thus conserves the redox energy in a proton gradient. This subunit may bind ubiquinone. This is NADH-quinone oxidoreductase subunit H from Ralstonia pickettii (strain 12J).